The primary structure comprises 360 residues: Photosystem II protein D1 2 (360 aa).

At 1–31 (MTTTLQQRESASLWEQFCQWVTSTNNRIYVG) the chain is on the cytoplasmic side. Residues 32–53 (WFGTLMIPTLLTATTCFIIAFI) form a helical membrane-spanning segment. The Lumenal, thylakoid portion of the chain corresponds to 54–110 (AAPPVDIDGIREPVAGSLLYGNNIISGAVVPSSNAIGLHFYPIWEAASLDEWLYNGG). Residues 111–134 (PYQLVVFHFLIGIFCYMGRQWELS) form a helical membrane-spanning segment. Histidine 118 is a chlorophyll a binding site. Tyrosine 126 contacts pheophytin a. At 135–142 (YRLGMRPW) the chain is on the cytoplasmic side. Residues 143 to 161 (ICVAYSAPVSAATAVFLIY) form a helical membrane-spanning segment. Tyrosine 147 is a binding site for pheophytin a. Residues 162 to 191 (PIGQGSFSDGMPLGISGTFNFMIVFQAEHN) are Lumenal, thylakoid-facing. Residues aspartate 170 and glutamate 189 each contribute to the [CaMn4O5] cluster site. The chain crosses the membrane as a helical span at residues 192-218 (ILMHPFHMLGVAGVFGGSLFSAMHGSL). A chlorophyll a-binding site is contributed by histidine 198. A quinone contacts are provided by histidine 215, serine 264, and phenylalanine 265. Residue histidine 215 participates in Fe cation binding. At 219–270 (VTSSLVRETTEVESQNYGYKFGQEEETYNIVAAHGYFGRLIFQYASFNNSRS) the chain is on the cytoplasmic side. Residues 271 to 295 (LHFFLGAWPVIGIWFTAMGVSTMAF) form a helical membrane-spanning segment. Histidine 272 lines the Fe cation pocket. Topologically, residues 296 to 360 (NLNGFNFNQS…VALTAPAVNG (65 aa)) are lumenal, thylakoid. Residues histidine 332, glutamate 333, histidine 337, aspartate 342, and alanine 344 each contribute to the [CaMn4O5] cluster site. A propeptide spanning residues 345–360 (SGEQAPVALTAPAVNG) is cleaved from the precursor.

This sequence belongs to the reaction center PufL/M/PsbA/D family. As to quaternary structure, PSII is composed of 1 copy each of membrane proteins PsbA, PsbB, PsbC, PsbD, PsbE, PsbF, PsbH, PsbI, PsbJ, PsbK, PsbL, PsbM, PsbT, PsbX, PsbY, PsbZ, Psb30/Ycf12, peripheral proteins PsbO, CyanoQ (PsbQ), PsbU, PsbV and a large number of cofactors. It forms dimeric complexes. The cofactor is The D1/D2 heterodimer binds P680, chlorophylls that are the primary electron donor of PSII, and subsequent electron acceptors. It shares a non-heme iron and each subunit binds pheophytin, quinone, additional chlorophylls, carotenoids and lipids. D1 provides most of the ligands for the Mn4-Ca-O5 cluster of the oxygen-evolving complex (OEC). There is also a Cl(-1) ion associated with D1 and D2, which is required for oxygen evolution. The PSII complex binds additional chlorophylls, carotenoids and specific lipids.. C-terminally processed by CtpA; processing is essential to allow assembly of the oxygen-evolving complex and photosynthetic growth. Post-translationally, tyr-161 forms a radical intermediate that is referred to as redox-active TyrZ, YZ or Y-Z.

It is found in the cellular thylakoid membrane. It catalyses the reaction 2 a plastoquinone + 4 hnu + 2 H2O = 2 a plastoquinol + O2. In terms of biological role, photosystem II (PSII) is a light-driven water:plastoquinone oxidoreductase that uses light energy to abstract electrons from H(2)O, generating O(2) and a proton gradient subsequently used for ATP formation. It consists of a core antenna complex that captures photons, and an electron transfer chain that converts photonic excitation into a charge separation. The D1/D2 (PsbA/PsbD) reaction center heterodimer binds P680, the primary electron donor of PSII as well as several subsequent electron acceptors. This chain is Photosystem II protein D1 2, found in Synechocystis sp. (strain ATCC 27184 / PCC 6803 / Kazusa).